Here is a 1402-residue protein sequence, read N- to C-terminus: MKELIEMYKPHNIAEDFDKIHIGLASPDVIRSWSYGEVKKPETINYRTFKPERDGLFCAKIFGPIKDYECLCGKYKRLKHRGVVCERCGVEVTKSSVRRERMGHIELATPVAHIWFLKSLPSRIGLLLDLTLREIERVLYFESFIVIDPGMTPLEKHQLLNEDAYKEAVDMYGHEFKAMMGAEAIQYILKNMNLENEIQDIHEQLNATHSETKIKRLLKRLKLMTSLLDSGNKPEWMILEVLPVLPPDLRPLVPLDSGRFATSDLNDLYRRVINRNNRLKRLLELYAPDIIVRNEKRMLQEAVDSLLDNGRRGRTVTGTNKRPLKSLADMIKGKQGRFRQNLLGKRVDYSGRSVIVVGPTLRLHQCGLPKRMALELFKPFIFHYLITNEFASTIKAAKLMVERDEPAVWDALEFVIRQHPVMLNRAPTLHRLGIQAFEPILIEGKAIQLHPLACAAFNADFDGDQMAVHVPLSLEAQLEARTLMMSSNNILSPANGEPIIVPSQDMVLGLYYMTRERINAKGEGMRFTDVKEVERAYQNGLVDLQAIIEVRLPHYEENGTGEGTLVRTKTTVGRALLSQILPKGLSFSYIDKPMKKKAISALINQCYRQLGLKDTVILADQLMYTGYHYATRSGSSIGVSDMVVPDAKAEILARSEAEVKEIEHQYASGLLTSGEKYNKVIDIWSRTGDQVARKMMEQLGKVRLQNRQGEWVEQDSFNSVYMMADSGARGSAAQIRQLAGMRGLMAKPDGSIIETPITANFREGLNVLQYFISTHGARKGLADTALKTANSGYLTRRLVDVAQDVVITEDDCGTTEGIEIQAVVEGGDVVVSLADRVLGRVLSEPVIDGNTGEVALAAGTLLEEPQIAILEKAGVDRVFVRSVITCATRHGVCAKCYGRDLARGHLVTAGEAVGVIAAQSIGEPGTQLTMRTFHIGGAAQSAASIGSVEVKTNGVARLSNMKTVVNKDGKLVSISRSGELSIIDMYGHERERYKLPYGATLNIANGEEVKQGQILATWDPHTHPVIAEVAGKASFFDFEDGVTVQTSSDADTGLAVLTILDNAQRPTSAKDKRPLIQLLDENGNPVTSAGSEIPVNYFLPAGAVVNLNDGDDIHIGDVLARIPQASGKLSDITGGLPRVADLFEARKPKEPAILAEITGTVSFGKETKGKQRLVINSDDGEVFEILIPKWRRLNVFEGEQVRKGEILADGEPSPHDILRLRGVHELNEHIVREIQTVYRLQGVKINDKHIEVIVRQMLRKVLILDAGESHFIAGEQAELTRVLQENDRLQAQNKLPIRYEPILMGITKASLATESFISAASFQETTRVLTEASVLGQVDDLFGLKENVIVGRLIPAGTGLAYHQHRRNMRDEDRFLNGSASSNEKSRSAGVLEATDEESAGD.

The Zn(2+) site is built by Cys-70, Cys-72, Cys-85, and Cys-88. The Mg(2+) site is built by Asp-460, Asp-462, and Asp-464. Zn(2+) is bound by residues Cys-812, Cys-886, Cys-893, and Cys-896. The disordered stretch occupies residues 1373 to 1402 (DRFLNGSASSNEKSRSAGVLEATDEESAGD).

This sequence belongs to the RNA polymerase beta' chain family. The RNAP catalytic core consists of 2 alpha, 1 beta, 1 beta' and 1 omega subunit. When a sigma factor is associated with the core the holoenzyme is formed, which can initiate transcription. Mg(2+) is required as a cofactor. It depends on Zn(2+) as a cofactor.

The enzyme catalyses RNA(n) + a ribonucleoside 5'-triphosphate = RNA(n+1) + diphosphate. Functionally, DNA-dependent RNA polymerase catalyzes the transcription of DNA into RNA using the four ribonucleoside triphosphates as substrates. This is DNA-directed RNA polymerase subunit beta' from Dichelobacter nodosus (strain VCS1703A).